The primary structure comprises 713 residues: MPHSVLARLPPGSVRLVAAFGLLLLVSLLVLHRRPGRPHVAAAAASDRLTDPSRSRLFLSQSPGANASIAADLRALTAGPHLAGTPASAGAAAHVLARLRAAGLQTLTREYEPLLSYPGHASLALLRPDGSLLARLSLEEPADEGRRVVPPYHAYAPSGGAVAEAVFVNLGREEDYVVLERLGVGVRGRVAVARRGGGYRGGVVARAADKGAVAVLIAGNADGGVERGVVLLGGPGDPLTPGWAATSGAERLKFDDKAVKQRFPSIPSMPVSAKTAAAIIRSLGGPAIPAEWKDGLGVDTGGLGPGPTLVNFTYQEDRKFYKIRDIFGIIKGQEEPDRYVILGNHRDAWTYGAVDPNSGTAALLDIARRLGIMLQSGWKPRRSIILCSWDGEEFGMIGSTEWVEDNLEDLHSKAVAYLNVDCAVQGVGFFAGSTPQLDKLLVDITRQVRDPDVTGKMVHDTWNEMSGGIKIERLARTDSDFAPFLHHAGIPSVDLYYGEEFPGYHTALDTYNWMEKHGDPFFLRHLAITEIWGLLALRLANDPVLPFDYQAYTSQLQEHIKTLSALTSNGHAVNLMNGCVNDLSGAAMEVLKEMKKLQQMDLYDEHARMRRRLLNDRLLLAERSFLQPEGLQGRGWFKHLLYSPPEDYESKLSFFPGIADAISRSANLSDKEQEVAMQHEVWKVCRAIQRAASVLRGEFSEQKPTNFSSLVTP.

The Cytoplasmic segment spans residues 1 to 10 (MPHSVLARLP). A helical; Signal-anchor for type II membrane protein transmembrane segment spans residues 11-31 (PGSVRLVAAFGLLLLVSLLVL). At 32 to 713 (HRRPGRPHVA…PTNFSSLVTP (682 aa)) the chain is on the extracellular side. 2 N-linked (GlcNAc...) asparagine glycosylation sites follow: asparagine 66 and asparagine 311. Residues 245–539 (ATSGAERLKF…EIWGLLALRL (295 aa)) form a catalytic region. Zn(2+) is bound by residues histidine 345 and aspartate 355. Residue glutamate 392 is the Nucleophile of the active site. Zn(2+) contacts are provided by glutamate 393, aspartate 421, and histidine 505. N-linked (GlcNAc...) asparagine glycosylation is found at asparagine 667 and asparagine 706.

It belongs to the peptidase M28 family. M28B subfamily. It depends on Zn(2+) as a cofactor.

The protein localises to the cell membrane. It catalyses the reaction Release of an unsubstituted, C-terminal glutamyl residue, typically from Ac-Asp-Glu or folylpoly-gamma-glutamates.. Functionally, involved in the regulation of meristem development and seed maturation processes. Mediates regulation of embryonic regulatory genes and genes controlling abscisic acid (ABA) biosynthesis and turnover in developing seeds. May be required for the synthesis of small signaling molecules that integrates meristem and embryo formation in seeds. The polypeptide is Probable glutamate carboxypeptidase VP8 (Zea mays (Maize)).